A 438-amino-acid chain; its full sequence is Xylose isomerase (438 aa).

Residues histidine 100 and aspartate 103 contribute to the active site. Mg(2+) contacts are provided by glutamate 231, glutamate 267, histidine 270, aspartate 295, aspartate 306, aspartate 308, and aspartate 338.

Belongs to the xylose isomerase family. Homotetramer. Requires Mg(2+) as cofactor.

The protein resides in the cytoplasm. The enzyme catalyses alpha-D-xylose = alpha-D-xylulofuranose. The polypeptide is Xylose isomerase (Pseudomonas savastanoi pv. phaseolicola (strain 1448A / Race 6) (Pseudomonas syringae pv. phaseolicola (strain 1448A / Race 6))).